Consider the following 493-residue polypeptide: 3-octaprenyl-4-hydroxybenzoate carboxy-lyase (493 aa).

Residue N177 participates in Mn(2+) binding. Prenylated FMN-binding positions include 180–182 (IYR), 194–196 (RWL), and 199–200 (RG). E243 provides a ligand contact to Mn(2+). The Proton donor role is filled by D292.

It belongs to the UbiD family. As to quaternary structure, homohexamer. Prenylated FMN serves as cofactor. The cofactor is Mn(2+).

It is found in the cell membrane. It catalyses the reaction a 4-hydroxy-3-(all-trans-polyprenyl)benzoate + H(+) = a 2-(all-trans-polyprenyl)phenol + CO2. The protein operates within cofactor biosynthesis; ubiquinone biosynthesis. Its function is as follows. Catalyzes the decarboxylation of 3-octaprenyl-4-hydroxy benzoate to 2-octaprenylphenol, an intermediate step in ubiquinone biosynthesis. This is 3-octaprenyl-4-hydroxybenzoate carboxy-lyase from Colwellia psychrerythraea (strain 34H / ATCC BAA-681) (Vibrio psychroerythus).